We begin with the raw amino-acid sequence, 409 residues long: Divalent metal cation transporter MntH (409 aa).

11 helical membrane passes run 19 to 39 (LSLM…GNFA), 46 to 66 (ATFG…AMLV), 98 to 118 (WVQA…GAAI), 122 to 142 (LLFG…TFLI), 155 to 175 (LVIG…LIFS), 196 to 216 (AVFL…IYLH), 241 to 261 (IAMT…AAAF), 290 to 310 (VFGL…TLAG), 320 to 340 (FYIP…IVIL), 348 to 368 (ILVM…VPLL), and 388 to 408 (ILGK…LISL).

The protein belongs to the NRAMP family.

It localises to the cell inner membrane. H(+)-stimulated, divalent metal cation uptake system. This Yersinia pseudotuberculosis serotype O:1b (strain IP 31758) protein is Divalent metal cation transporter MntH.